Consider the following 98-residue polypeptide: Co-chaperonin GroES 4 (98 aa).

This sequence belongs to the GroES chaperonin family. Heptamer of 7 subunits arranged in a ring. Interacts with the chaperonin GroEL.

It localises to the cytoplasm. In terms of biological role, together with the chaperonin GroEL, plays an essential role in assisting protein folding. The GroEL-GroES system forms a nano-cage that allows encapsulation of the non-native substrate proteins and provides a physical environment optimized to promote and accelerate protein folding. GroES binds to the apical surface of the GroEL ring, thereby capping the opening of the GroEL channel. The sequence is that of Co-chaperonin GroES 4 from Mesorhizobium japonicum (strain LMG 29417 / CECT 9101 / MAFF 303099) (Mesorhizobium loti (strain MAFF 303099)).